The chain runs to 51 residues: SEAVAEKEDDPNFFKMVEGFFDKGAAIVENKLVEDLKTRGSPEVEGNLTFT.

A substrate-binding site is contributed by Lys-31.

The protein belongs to the Glu/Leu/Phe/Val dehydrogenases family. As to quaternary structure, homohexamer.

It localises to the mitochondrion matrix. It catalyses the reaction L-glutamate + NAD(+) + H2O = 2-oxoglutarate + NH4(+) + NADH + H(+). The enzyme catalyses L-glutamate + NADP(+) + H2O = 2-oxoglutarate + NH4(+) + NADPH + H(+). Mitochondrial glutamate dehydrogenase that converts L-glutamate into alpha-ketoglutarate. Plays a key role in glutamine anaplerosis by producing alpha-ketoglutarate, an important intermediate in the tricarboxylic acid cycle. The sequence is that of Glutamate dehydrogenase from Electrophorus electricus (Electric eel).